Consider the following 502-residue polypeptide: Cysteine protease RavZ (502 aa).

2 short sequence motifs (LIR) span residues 9 to 23 (DKLI…GEQE) and 23 to 37 (ESDI…GDEK). The tract at residues 49–325 (SIYPPETSWE…ESALTEGKTL (277 aa)) is catalytic region. Active-site residues include histidine 176 and aspartate 197. An alpha-3 helix region spans residues 211–217 (YFKGKYR). Cysteine 258 is a catalytic residue. The membrane targeting region stretch occupies residues 326–431 (PVQLSEFIVA…VLPCVKFDDT (106 aa)). The LIR 3 motif lies at 429–443 (DDTIDDFVTIEKDEL).

It is found in the secreted. The protein resides in the host cytoplasmic vesicle membrane. The enzyme catalyses [protein]-C-terminal L-amino acid-glycyl-phosphatidylethanolamide + H2O = a 1,2-diacyl-sn-glycero-3-phosphoethanolamine-N-glycine + [protein]-C-terminal &lt;stereo&gt;L-&lt;/stereo&gt;amino acid. The catalysed reaction is [protein]-C-terminal L-amino acid-glycyl-phosphatidylserine + H2O = 1,2-diacyl-sn-glycero-3-phospho-L-serine-N-glycine + [protein]-C-terminal &lt;stereo&gt;L-&lt;/stereo&gt;amino acid. Its function is as follows. Cysteine protease effector that inhibits host cell autophagy by targeting lipid-conjugated ATG8 family proteins on pre-autophagosomal structures. Specifically hydrolyzes the amide bond between the C-terminal glycine residue and an adjacent aromatic residue in ATG8 proteins conjugated to phosphatidylethanolamine (PE), producing an ATG8 protein that cannot be reconjugated by host ATG7 and ATG3. Mechanistically, Ravz interacts with ATG8 proteins conjugated to PE via its LIR motifs, extracts them from the membrane of autophagosomes and integrates the PE part into its own lipid-binding site. It then removes the lipid component of the ATG8 protein. Also able to mediate delipidation of ATG8 proteins conjugated to phosphatidylserine (PS) during non-canonical autophagy. Inhibits host ubiquitin recruitment to bacteria-containing vacuoles, suggesting that it is able to mediate delipidation of other proteins in addition to ATG8 proteins. It is however not involved in the exclusion of autophagy adapters from bacteria-containing vacuoles decorated with ubiquitin. The sequence is that of Cysteine protease RavZ from Legionella pneumophila subsp. pneumophila (strain Philadelphia 1 / ATCC 33152 / DSM 7513).